Reading from the N-terminus, the 323-residue chain is tRNA U34 carboxymethyltransferase (323 aa).

Carboxy-S-adenosyl-L-methionine contacts are provided by residues Lys-91, Trp-105, Lys-110, Gly-130, 152–154 (DPS), 181–182 (IE), Met-196, Tyr-200, and Arg-315.

The protein belongs to the class I-like SAM-binding methyltransferase superfamily. CmoB family. Homotetramer.

The enzyme catalyses carboxy-S-adenosyl-L-methionine + 5-hydroxyuridine(34) in tRNA = 5-carboxymethoxyuridine(34) in tRNA + S-adenosyl-L-homocysteine + H(+). Its function is as follows. Catalyzes carboxymethyl transfer from carboxy-S-adenosyl-L-methionine (Cx-SAM) to 5-hydroxyuridine (ho5U) to form 5-carboxymethoxyuridine (cmo5U) at position 34 in tRNAs. This Vibrio parahaemolyticus serotype O3:K6 (strain RIMD 2210633) protein is tRNA U34 carboxymethyltransferase.